A 491-amino-acid chain; its full sequence is Protein DETOXIFICATION 56 (491 aa).

The next 12 membrane-spanning stretches (helical) occupy residues 39-59 (LPLV…SVFL), 72-92 (LGFS…SAAM), 111-131 (TLFM…FLWL), 154-174 (LLYL…KAYL), 181-201 (LPIM…NIVL), 212-232 (MAVW…VIVV), 261-281 (GPCC…VLLT), 291-311 (VSIL…MLSL), 336-356 (YTTL…MIAF), 379-399 (MLIM…GEIV), 409-429 (MYAN…TLAF), and 438-458 (FLIG…IFIA).

The protein belongs to the multi antimicrobial extrusion (MATE) (TC 2.A.66.1) family. In terms of assembly, interacts with BCA4 and HT1. Preferentially expressed in guard cells.

Its subcellular location is the cell membrane. Could function as a HCO(3)(-) -sensing component in the CO(2) signaling pathway in guard cells. Acts as an upstream repressor of HT1. Plays a role in stomatal response to CO(2). The chain is Protein DETOXIFICATION 56 from Arabidopsis thaliana (Mouse-ear cress).